The sequence spans 415 residues: Glutamyl-tRNA reductase (415 aa).

Substrate-binding positions include 49-52 (TCNR), S104, 109-111 (EPQ), and Q115. Catalysis depends on C50, which acts as the Nucleophile. An NADP(+)-binding site is contributed by 184–189 (GAGEMI).

This sequence belongs to the glutamyl-tRNA reductase family. In terms of assembly, homodimer.

It catalyses the reaction (S)-4-amino-5-oxopentanoate + tRNA(Glu) + NADP(+) = L-glutamyl-tRNA(Glu) + NADPH + H(+). The protein operates within porphyrin-containing compound metabolism; protoporphyrin-IX biosynthesis; 5-aminolevulinate from L-glutamyl-tRNA(Glu): step 1/2. Its function is as follows. Catalyzes the NADPH-dependent reduction of glutamyl-tRNA(Glu) to glutamate 1-semialdehyde (GSA). The polypeptide is Glutamyl-tRNA reductase (Neisseria gonorrhoeae (strain ATCC 700825 / FA 1090)).